Reading from the N-terminus, the 383-residue chain is Succinyl-diaminopimelate desuccinylase (383 aa).

Position 68 (H68) interacts with Zn(2+). D70 is an active-site residue. A Zn(2+)-binding site is contributed by D100. Residue E130 is the Proton acceptor of the active site. Zn(2+) contacts are provided by E131, E159, and H352.

Belongs to the peptidase M20A family. DapE subfamily. As to quaternary structure, homodimer. The cofactor is Zn(2+). Requires Co(2+) as cofactor.

It catalyses the reaction N-succinyl-(2S,6S)-2,6-diaminopimelate + H2O = (2S,6S)-2,6-diaminopimelate + succinate. Its pathway is amino-acid biosynthesis; L-lysine biosynthesis via DAP pathway; LL-2,6-diaminopimelate from (S)-tetrahydrodipicolinate (succinylase route): step 3/3. Its function is as follows. Catalyzes the hydrolysis of N-succinyl-L,L-diaminopimelic acid (SDAP), forming succinate and LL-2,6-diaminopimelate (DAP), an intermediate involved in the bacterial biosynthesis of lysine and meso-diaminopimelic acid, an essential component of bacterial cell walls. The protein is Succinyl-diaminopimelate desuccinylase of Granulibacter bethesdensis (strain ATCC BAA-1260 / CGDNIH1).